We begin with the raw amino-acid sequence, 544 residues long: Chaperonin GroEL 1 (544 aa).

Residues 30-33, Lys-51, 87-91, Gly-415, 481-483, and Asp-497 each bind ATP; these read TLGP, DGTTT, and DAL.

The protein belongs to the chaperonin (HSP60) family. In terms of assembly, forms a cylinder of 14 subunits composed of two heptameric rings stacked back-to-back. Interacts with the co-chaperonin GroES.

It localises to the cytoplasm. The catalysed reaction is ATP + H2O + a folded polypeptide = ADP + phosphate + an unfolded polypeptide.. In terms of biological role, together with its co-chaperonin GroES, plays an essential role in assisting protein folding. The GroEL-GroES system forms a nano-cage that allows encapsulation of the non-native substrate proteins and provides a physical environment optimized to promote and accelerate protein folding. In Chlamydia pneumoniae (Chlamydophila pneumoniae), this protein is Chaperonin GroEL 1.